We begin with the raw amino-acid sequence, 177 residues long: Parathyroid hormone-related protein (177 aa).

An N-terminal signal peptide occupies residues 1 to 24; sequence MLRRLVQQWGVAVFLLSYSVPSCG. The propeptide occupies 25 to 34; sequence RSVEELGRRL. The segment at 57–68 is important for receptor binding; that stretch reads RFFLHHLIAEIH. The tract at residues 74-177 is disordered; sequence ATSEVSPNSK…TSLELNLRRH (104 aa). Residues 76–90 show a composition bias toward polar residues; that stretch reads SEVSPNSKPAPNTKN. Residues 108-129 carry the Nuclear localization signal motif; sequence TNKVETYKEQPLKTPGKKKKGK. Residues 109–118 show a composition bias toward basic and acidic residues; the sequence is NKVETYKEQP. Residues 122 to 132 are compositionally biased toward basic residues; the sequence is PGKKKKGKPGK.

Belongs to the parathyroid hormone family. In terms of assembly, PTHrP interacts with PTH1R (via N-terminal extracellular domain). Post-translationally, there are several secretory forms, including osteostatin, arising from endoproteolytic cleavage of the initial translation product. Each of these secretory forms is believed to have one or more of its own receptors that mediates the normal paracrine, autocrine and endocrine actions.

The protein localises to the secreted. Its subcellular location is the cytoplasm. It localises to the nucleus. In terms of biological role, neuroendocrine peptide which is a critical regulator of cellular and organ growth, development, migration, differentiation and survival and of epithelial calcium ion transport. Acts by binding to its receptor, PTH1R, activating G protein-coupled receptor signaling. Regulates endochondral bone development and epithelial-mesenchymal interactions during the formation of the mammary glands and teeth. Required for skeletal homeostasis. Promotes mammary mesenchyme differentiation and bud outgrowth by modulating mesenchymal cell responsiveness to BMPs. Up-regulates BMPR1A expression in the mammary mesenchyme and this increases the sensitivity of these cells to BMPs and allows them to respond to BMP4 in a paracrine and/or autocrine fashion. BMP4 signaling in the mesenchyme, in turn, triggers epithelial outgrowth and augments MSX2 expression, which causes the mammary mesenchyme to inhibit hair follicle formation within the nipple sheath. Potent inhibitor of osteoclastic bone resorption. The protein is Parathyroid hormone-related protein (PTHLH) of Canis lupus familiaris (Dog).